A 575-amino-acid chain; its full sequence is DNA-directed RNA polymerase subunit beta' (575 aa).

Zn(2+) is bound by residues cysteine 64, cysteine 66, cysteine 85, and cysteine 88. Aspartate 440, aspartate 442, and aspartate 444 together coordinate Mg(2+).

It belongs to the RNA polymerase beta' chain family. RpoC1 subfamily. In terms of assembly, in plastids the minimal PEP RNA polymerase catalytic core is composed of four subunits: alpha, beta, beta', and beta''. When a (nuclear-encoded) sigma factor is associated with the core the holoenzyme is formed, which can initiate transcription. The cofactor is Mg(2+). Zn(2+) is required as a cofactor.

The protein resides in the plastid. The catalysed reaction is RNA(n) + a ribonucleoside 5'-triphosphate = RNA(n+1) + diphosphate. Its function is as follows. DNA-dependent RNA polymerase catalyzes the transcription of DNA into RNA using the four ribonucleoside triphosphates as substrates. The sequence is that of DNA-directed RNA polymerase subunit beta' from Euglena longa (Euglenophycean alga).